Reading from the N-terminus, the 332-residue chain is MKPTMMSNWPGFINRFVRQVRHPLDFRRPYRITGFPDNLSPLGYFGQTKQYARAAQEPYLVTVVQGRSKKPCSPRERANRRFGEDSWFVSSTPRAEVLGVADGVGGWRDMGVDAGRFAKELMGCCCGRSEQEDFDGRNPRSLLVSSYQELKDRDDPVVGSSTACVVAMHRRDLTLYTANLGDSGFMVLRNGRVMHRSEEQTHDFNTPFQLTVAPSHKLDSVHCDGPEKAAVSRHPLAPGDLVLLATDGLFDNLPESMLLEMLRKFHGVRDEKELQDAANQVVEKARELSMNASFPSPFAVKARANNISYSGGGKPDDITLILASVEVPKVHR.

The PPM-type phosphatase domain occupies 70 to 325 (KPCSPRERAN…DDITLILASV (256 aa)). Mn(2+) is bound by residues Asp-102, Gly-103, and Asp-247.

The protein belongs to the PP2C family. Requires Mg(2+) as cofactor. Mn(2+) is required as a cofactor.

It catalyses the reaction O-phospho-L-seryl-[protein] + H2O = L-seryl-[protein] + phosphate. The enzyme catalyses O-phospho-L-threonyl-[protein] + H2O = L-threonyl-[protein] + phosphate. This chain is Protein phosphatase PTC7 homolog fig, found in Drosophila ananassae (Fruit fly).